Here is a 319-residue protein sequence, read N- to C-terminus: Methionyl-tRNA formyltransferase (319 aa).

Serine 116–proline 119 provides a ligand contact to (6S)-5,6,7,8-tetrahydrofolate.

This sequence belongs to the Fmt family.

It carries out the reaction L-methionyl-tRNA(fMet) + (6R)-10-formyltetrahydrofolate = N-formyl-L-methionyl-tRNA(fMet) + (6S)-5,6,7,8-tetrahydrofolate + H(+). In terms of biological role, attaches a formyl group to the free amino group of methionyl-tRNA(fMet). The formyl group appears to play a dual role in the initiator identity of N-formylmethionyl-tRNA by promoting its recognition by IF2 and preventing the misappropriation of this tRNA by the elongation apparatus. The chain is Methionyl-tRNA formyltransferase from Wigglesworthia glossinidia brevipalpis.